The sequence spans 324 residues: Aldo-keto reductase family 1 member A1 (324 aa).

Ser3 carries the post-translational modification Phosphoserine. Residues 10–19 (GQKMPLIGLG), Thr20, and Trp21 each bind NADP(+). Residue Ser37 is modified to Phosphoserine. Asp44 serves as a coordination point for NADP(+). Tyr49 serves as the catalytic Proton donor. Lys126 carries the N6-acetyllysine; alternate modification. N6-succinyllysine; alternate is present on Lys126. N6-succinyllysine is present on Lys144. 13 residues coordinate NADP(+): Ser161, Asn162, Ser210, Leu212, Ser214, Ser215, Lys262, Ser263, Ile264, Thr265, Arg268, Gln271, and Asn272. At Ser210 the chain carries Phosphoserine.

This sequence belongs to the aldo/keto reductase family.

It localises to the cytoplasm. It is found in the cytosol. The protein resides in the apical cell membrane. The enzyme catalyses a primary alcohol + NADP(+) = an aldehyde + NADPH + H(+). It catalyses the reaction L-gulonate + NADP(+) = aldehydo-D-glucuronate + NADPH + H(+). The catalysed reaction is L-gulono-1,4-lactone + NADP(+) = D-glucurono-3,6-lactone + NADPH + H(+). It carries out the reaction allyl alcohol + NADP(+) = acrolein + NADPH + H(+). The enzyme catalyses glycerol + NADP(+) = D-glyceraldehyde + NADPH + H(+). It catalyses the reaction glycerol + NADP(+) = L-glyceraldehyde + NADPH + H(+). The catalysed reaction is hydroxyacetone + NADP(+) = methylglyoxal + NADPH + H(+). It carries out the reaction 3-deoxyfructose + NADP(+) = 3-deoxyglucosone + NADPH + H(+). The enzyme catalyses (R)-mevalonate + NADP(+) = (R)-mevaldate + NADPH + H(+). It catalyses the reaction S-nitroso-CoA + NADPH + H(+) = sulfinamide-CoA + NADP(+). The catalysed reaction is S-nitrosoglutathione + NADPH + H(+) = S-(hydroxysulfenamide)glutathione + NADP(+). Its function is as follows. Catalyzes the NADPH-dependent reduction of a wide variety of carbonyl-containing compounds to their corresponding alcohols. Displays enzymatic activity towards endogenous metabolites such as aromatic and aliphatic aldehydes, ketones, monosaccharides and bile acids, with a preference for negatively charged substrates, such as glucuronate and succinic semialdehyde. Plays an important role by catalyzing the reduction of D-glucuronic acid and D-glucurono-gamma-lactone. Functions as a detoxifiying enzyme by reducing a range of toxic aldehydes. Reduces methylglyoxal and 3-deoxyglucosone, which are present at elevated levels under hyperglycemic conditions and are cytotoxic. Involved also in the detoxification of lipid-derived aldehydes like acrolein. Plays a role in the activation of procarcinogens, such as polycyclic aromatic hydrocarbon trans-dihydrodiols, and in the metabolism of various xenobiotics and drugs. Also acts as an inhibitor of protein S-nitrosylation by mediating degradation of S-nitroso-coenzyme A (S-nitroso-CoA), a cofactor required to S-nitrosylate proteins. S-nitroso-CoA reductase activity is involved in reprogramming intermediary metabolism in renal proximal tubules, notably by inhibiting protein S-nitrosylation of isoform 2 of PKM (PKM2). Also acts as a S-nitroso-glutathione reductase by catalyzing the NADPH-dependent reduction of S-nitrosoglutathione. Displays no reductase activity towards retinoids. This Cricetulus griseus (Chinese hamster) protein is Aldo-keto reductase family 1 member A1 (AKR1A1).